The chain runs to 257 residues: Snake venom serine protease salmonase (257 aa).

An N-terminal signal peptide occupies residues 1–18 (MVLIRVLVNFLILQLSYA). A propeptide spanning residues 19–24 (QKSSEL) is cleaved from the precursor. The Peptidase S1 domain occupies 25 to 248 (VIGGDECNIN…YIDWIQSIIA (224 aa)). 5 cysteine pairs are disulfide-bonded: cysteine 31/cysteine 162, cysteine 49/cysteine 65, cysteine 141/cysteine 209, cysteine 173/cysteine 188, and cysteine 199/cysteine 224. Histidine 64 functions as the Charge relay system in the catalytic mechanism. A glycan (N-linked (GlcNAc...) asparagine) is linked at asparagine 78. The active-site Charge relay system is aspartate 109. The active-site Charge relay system is serine 203.

This sequence belongs to the peptidase S1 family. Snake venom subfamily. As to quaternary structure, monomer. In terms of tissue distribution, expressed by the venom gland.

The protein localises to the secreted. Its function is as follows. Snake venom serine protease that may act in the hemostasis system of the prey. This chain is Snake venom serine protease salmonase, found in Gloydius brevicauda (Korean slamosa snake).